A 533-amino-acid polypeptide reads, in one-letter code: Peptidyl-prolyl cis-trans isomerase-like 2 (533 aa).

The 74-residue stretch at K38–K111 folds into the U-box domain. The region spanning K284–M438 is the PPIase cyclophilin-type domain. A coiled-coil region spans residues F443 to K519. The span at L454–M477 shows a compositional bias: basic and acidic residues. A disordered region spans residues L454 to F533. Residues T523–F533 are compositionally biased toward polar residues.

The protein belongs to the cyclophilin-type PPIase family. PPIL2 subfamily.

The protein resides in the nucleus. The catalysed reaction is [protein]-peptidylproline (omega=180) = [protein]-peptidylproline (omega=0). The enzyme catalyses S-ubiquitinyl-[E2 ubiquitin-conjugating enzyme]-L-cysteine + [acceptor protein]-L-lysine = [E2 ubiquitin-conjugating enzyme]-L-cysteine + N(6)-ubiquitinyl-[acceptor protein]-L-lysine.. It participates in protein modification; protein ubiquitination. Functionally, may catalyze the cis-trans isomerization of proline imidic peptide bonds in oligopeptides thereby assisting the folding of proteins. May also function as a chaperone, playing a role in intracellular transport of proteins. May also have a protein ubiquitin ligase activity acting as an E3 ubiquitin protein ligase or as a ubiquitin-ubiquitin ligase promoting elongation of ubiquitin chains on proteins. The protein is Peptidyl-prolyl cis-trans isomerase-like 2 (cyp14) of Rhizopus delemar (strain RA 99-880 / ATCC MYA-4621 / FGSC 9543 / NRRL 43880) (Mucormycosis agent).